The sequence spans 183 residues: MFLRPTSIPSAVSQIRAQLFAGPSSLASQIQVRWASKAAGGKSKNGRESAGRRLGVKRYGDQYVTPGTIIVRQRGANFHPGQNVAVGKDFTIYALQPGYVKFYQHHLPYPHLSRPDQPGPQNVPSVKRPRQFRQFVGIARDREDKLPRDERAVGRERRFWGWPKEKVEVVPEAAVESAAGIQA.

Residues 1–34 constitute a mitochondrion transit peptide; sequence MFLRPTSIPSAVSQIRAQLFAGPSSLASQIQVRW.

It belongs to the bacterial ribosomal protein bL27 family.

The protein localises to the mitochondrion. In Cryptococcus neoformans var. neoformans serotype D (strain B-3501A) (Filobasidiella neoformans), this protein is Large ribosomal subunit protein bL27m (RPL27).